The following is a 150-amino-acid chain: uncharacterized protein (150 aa).

This is an uncharacterized protein from Mycoplasma genitalium (strain ATCC 33530 / DSM 19775 / NCTC 10195 / G37) (Mycoplasmoides genitalium).